We begin with the raw amino-acid sequence, 464 residues long: Cystathionine beta-lyase, chloroplastic (464 aa).

The N-terminal 55 residues, 1 to 55 (MTSSLSLHSSFVPSFADLSDRGLISKNSPTSVSISKVPTWEKKQISNRNSFKLNC), are a transit peptide targeting the chloroplast. Residues Tyr-127, Arg-129, Gly-157, Met-158, Ser-275, and Thr-277 each coordinate pyridoxal 5'-phosphate. Lys-278 bears the N6-(pyridoxal phosphate)lysine mark.

Belongs to the trans-sulfuration enzymes family. In terms of assembly, forms homodimers. May form homotetramers from two homodimers. Requires pyridoxal 5'-phosphate as cofactor.

It localises to the plastid. Its subcellular location is the chloroplast. The enzyme catalyses L,L-cystathionine + H2O = L-homocysteine + pyruvate + NH4(+). The catalysed reaction is an S-substituted L-cysteine + H2O = a thiol + pyruvate + NH4(+). The protein operates within amino-acid biosynthesis; L-methionine biosynthesis via de novo pathway; L-homocysteine from L-cystathionine: step 1/1. Its function is as follows. Catalyzes the penultimate step in the de novo biosynthesis of methionine. Its role in methionine metabolism may affect plant development in different organs, probably by modifying plant auxin transport. Its cysteine desulfhydrase activity may be involved in hydrogen sulfur production using L-cysteine as a substrate. The sequence is that of Cystathionine beta-lyase, chloroplastic from Arabidopsis thaliana (Mouse-ear cress).